The sequence spans 342 residues: MEERFLTPKDIGEEQLTRTLRPQRLDEYIGQRNVKQRLKISIEAAKVRNEALDHVLLAGPPGLGKTTLAHIIANEMGTNIYVTSGPVIEKQGDLAAILTSLEEGDVLFIDEIHRLGRAIEEILYSAMEDFKLDIMIGKGPSARSIRLDLAPFTLVGATTRSGLIGAPLRNRFGMVLELEFYTPDELKQIIKRSARLLEVKIDDEAAELLASRSRGTPRIANRLLRRVRDLATVDGTGKILSKTVEDAMKIMGIDAEGLDDMDRKILRVLIENYEGGPAGLKAIAASVGIEADTISEVYEPYLLQSGFIVRTNRGRMATKKAYRHLGIARFNGIGPLWDSTGD.

Residues 1–181 form a large ATPase domain (RuvB-L) region; that stretch reads MEERFLTPKD…FGMVLELEFY (181 aa). ATP is bound by residues Leu-20, Arg-21, Gly-62, Lys-65, Thr-66, Thr-67, 128-130, Arg-171, Tyr-181, and Arg-218; that span reads EDF. Thr-66 contributes to the Mg(2+) binding site. A small ATPAse domain (RuvB-S) region spans residues 182–252; it reads TPDELKQIIK…TVEDAMKIMG (71 aa). The head domain (RuvB-H) stretch occupies residues 255–342; it reads AEGLDDMDRK…IGPLWDSTGD (88 aa). DNA-binding residues include Arg-310 and Arg-315.

It belongs to the RuvB family. As to quaternary structure, homohexamer. Forms an RuvA(8)-RuvB(12)-Holliday junction (HJ) complex. HJ DNA is sandwiched between 2 RuvA tetramers; dsDNA enters through RuvA and exits via RuvB. An RuvB hexamer assembles on each DNA strand where it exits the tetramer. Each RuvB hexamer is contacted by two RuvA subunits (via domain III) on 2 adjacent RuvB subunits; this complex drives branch migration. In the full resolvosome a probable DNA-RuvA(4)-RuvB(12)-RuvC(2) complex forms which resolves the HJ.

It localises to the cytoplasm. It catalyses the reaction ATP + H2O = ADP + phosphate + H(+). The RuvA-RuvB-RuvC complex processes Holliday junction (HJ) DNA during genetic recombination and DNA repair, while the RuvA-RuvB complex plays an important role in the rescue of blocked DNA replication forks via replication fork reversal (RFR). RuvA specifically binds to HJ cruciform DNA, conferring on it an open structure. The RuvB hexamer acts as an ATP-dependent pump, pulling dsDNA into and through the RuvAB complex. RuvB forms 2 homohexamers on either side of HJ DNA bound by 1 or 2 RuvA tetramers; 4 subunits per hexamer contact DNA at a time. Coordinated motions by a converter formed by DNA-disengaged RuvB subunits stimulates ATP hydrolysis and nucleotide exchange. Immobilization of the converter enables RuvB to convert the ATP-contained energy into a lever motion, pulling 2 nucleotides of DNA out of the RuvA tetramer per ATP hydrolyzed, thus driving DNA branch migration. The RuvB motors rotate together with the DNA substrate, which together with the progressing nucleotide cycle form the mechanistic basis for DNA recombination by continuous HJ branch migration. Branch migration allows RuvC to scan DNA until it finds its consensus sequence, where it cleaves and resolves cruciform DNA. This chain is Holliday junction branch migration complex subunit RuvB, found in Kosmotoga olearia (strain ATCC BAA-1733 / DSM 21960 / TBF 19.5.1).